The primary structure comprises 923 residues: Alanine--tRNA ligase (923 aa).

4 residues coordinate Zn(2+): H614, H618, C717, and H721. Residues 884 to 903 (KVGGGGGGPPDFAQGGGPDA) are disordered. A compositionally biased stretch (gly residues) spans 885–901 (VGGGGGGPPDFAQGGGP).

This sequence belongs to the class-II aminoacyl-tRNA synthetase family. Zn(2+) is required as a cofactor.

The protein localises to the cytoplasm. The catalysed reaction is tRNA(Ala) + L-alanine + ATP = L-alanyl-tRNA(Ala) + AMP + diphosphate. In terms of biological role, catalyzes the attachment of alanine to tRNA(Ala) in a two-step reaction: alanine is first activated by ATP to form Ala-AMP and then transferred to the acceptor end of tRNA(Ala). Also edits incorrectly charged Ser-tRNA(Ala) and Gly-tRNA(Ala) via its editing domain. This is Alanine--tRNA ligase from Haloquadratum walsbyi (strain DSM 16790 / HBSQ001).